A 220-amino-acid chain; its full sequence is Phosphoserine phosphatase (220 aa).

Residue D11 is the Nucleophile of the active site. The Mg(2+) site is built by D11 and D13. D13 serves as the catalytic Proton donor. Substrate contacts are provided by residues E20, R56, 99–100 (SG), and K144. Residue D167 coordinates Mg(2+). N170 contributes to the substrate binding site.

It belongs to the HAD-like hydrolase superfamily. SerB family. The cofactor is Mg(2+).

The catalysed reaction is O-phospho-L-serine + H2O = L-serine + phosphate. It carries out the reaction O-phospho-D-serine + H2O = D-serine + phosphate. It participates in amino-acid biosynthesis; L-serine biosynthesis; L-serine from 3-phospho-D-glycerate: step 3/3. In Idiomarina loihiensis (strain ATCC BAA-735 / DSM 15497 / L2-TR), this protein is Phosphoserine phosphatase.